A 437-amino-acid polypeptide reads, in one-letter code: Enolase (437 aa).

Q162 serves as a coordination point for (2R)-2-phosphoglycerate. The Proton donor role is filled by E204. The Mg(2+) site is built by D251, E297, and D324. K349, R378, S379, and K400 together coordinate (2R)-2-phosphoglycerate. Catalysis depends on K349, which acts as the Proton acceptor.

The protein belongs to the enolase family. Mg(2+) serves as cofactor.

The protein localises to the cytoplasm. The protein resides in the secreted. It is found in the cell surface. The enzyme catalyses (2R)-2-phosphoglycerate = phosphoenolpyruvate + H2O. The protein operates within carbohydrate degradation; glycolysis; pyruvate from D-glyceraldehyde 3-phosphate: step 4/5. Catalyzes the reversible conversion of 2-phosphoglycerate (2-PG) into phosphoenolpyruvate (PEP). It is essential for the degradation of carbohydrates via glycolysis. In Chlorobium phaeobacteroides (strain DSM 266 / SMG 266 / 2430), this protein is Enolase.